We begin with the raw amino-acid sequence, 194 residues long: MSFAEKITGLLARPNQQDPIGPEQPWYLKYGSRLLGIVAAFFAILFGLWNVFSIITLSVSCLVAGIIQMVAGFVVMLLEAPCCFVCFEQVNVIADKVDSKPLYFRAGLYITMAIPPIILCFGLASLFGSGLIFGTGVVYGMMALGKKASAEDMRAAAQQTFGGNTPAQTNDRAGIVNNAQPFSFTGAVGTDSNV.

3 helical membrane passes run 35–55 (LGIV…FSII), 66–88 (IIQM…VCFE), and 113–133 (AIPP…GLIF).

Belongs to the calcium channel flower family. Homomultimer. Associates with the dally/ magu complex.

Its subcellular location is the cytoplasmic vesicle. The protein localises to the secretory vesicle. The protein resides in the synaptic vesicle membrane. It is found in the presynaptic cell membrane. It localises to the endosome. Channel activity is inhibited by La(3+), which reduces Ca(2+) influx and thus inhibits it's function in promoting activity-dependent bulk endocytosis (ADBE) in response to high stimuli. In terms of biological role, transmembrane protein which mediates synaptic endocytosis, fitness-based cell culling, neuronal culling, morphogen gradient scaling, and calcium transport. Regulates synaptic endocytosis and hence couples exo- with endocytosis. Controls two major modes of synaptic vesicle (SV) endocytosis in the synaptic boutons of neuromuscular junctions (NMJs); Ca(2+) channel-independent Clathrin-mediated endocytosis (CME) in response to mild stimulation, and Ca(2+) channel-dependent activity-dependent bulk endocytosis (ADBE) in response to strong stimulation. Functions in ADBE and subsequent SV reformation from bulk endosomes by initiating Ca(2+) channel-dependent phosphatidylinositol 4,5-bisphosphate (PtdIns(4,5)P2) compartmentalization in synaptic boutons. There it acts at the periactive zone to provide the low Ca(2+) levels required to initiate Calcineurin activation and upregulate PtdIns(4,5)P2. Conversely PtdIns(4,5)P2 enhances fwe Ca(2+) channel-activity, establishing a positive feedback loop that induces PtdIns(4,5)P2 microdomain at the periactive zone. These microdomains trigger bulk membrane invagination (i.e. ADBE) by triggering actin polymerization while also promoting localization of fwe to bulk endosomes, thereby removing the ADBE trigger to reduce endocytosis and prevent excess membrane uptake. PtdIns(4,5)P2 then promotes SV reformation from the bulk endosomes, to coordinate ADBE and subsequent SV reformation. Different combinations of the flower isoforms at the cell membrane are also required for the identification and elimination of suboptimal or supernumerary cells during development, regeneration, and adulthood. Required for the recognition and elimination of unfit cells in the developing wing during cell competition. In the developing pupal retina, mediates the elimination of unwanted postmitotic neurons, including supernumerary photoreceptor neurons that form at the periphery of the retina and are contained within incomplete ommatidia units. Also required for efficient elimination and replacement of old neurons by newly generated neurons during regeneration in the adult brain following mechanical injury. Downstream of the flower fitness fingerprints, cells identified as unwanted or unfit are eliminated via apoptosis through the expression of ahuizotl (azot). However, the cells marked for elimination by the flower isoforms only undergo apoptosis if additional thresholds are met; (1) their neighboring fit/healthy cells express different levels of the fwe isoforms, and (2) the levels of the protective signal SPARC expressed by the loser or unwanted cells are unable to inhibit caspase activation. These additional thresholds for flower-mediated apoptosis, allows useful cells to recover from transient and limited stress before they are unnecessarily eliminated. Functions with dally and magu in a mechanism of scaling, which utilises apoptosis to ensure that the dpp morphogen gradient, which mediates organ growth, remains proportional to the size of the growing wing. In this mechanism, fwe represses dally- and Magu-dependent activity in expanding the gradient, and dally/Magu inhibits fwe-dependent apoptosis to keep cell death rate low. When the levels of these different proteins are optimally regulated the gradient correctly scales with organ growth but when this fails, fwe-mediated apoptosis is activated to trim the developing tissue to match the correct size of the gradient. This chain is Calcium channel flower, found in Drosophila yakuba (Fruit fly).